Here is a 206-residue protein sequence, read N- to C-terminus: LexA repressor (206 aa).

Positions 28 to 48 (VREICAAVGLSSTSTVHGHLT) form a DNA-binding region, H-T-H motif. Active-site for autocatalytic cleavage activity residues include Ser-127 and Lys-165.

This sequence belongs to the peptidase S24 family. Homodimer.

It catalyses the reaction Hydrolysis of Ala-|-Gly bond in repressor LexA.. Its function is as follows. Represses a number of genes involved in the response to DNA damage (SOS response), including recA and lexA. In the presence of single-stranded DNA, RecA interacts with LexA causing an autocatalytic cleavage which disrupts the DNA-binding part of LexA, leading to derepression of the SOS regulon and eventually DNA repair. This chain is LexA repressor, found in Lactobacillus delbrueckii subsp. bulgaricus (strain ATCC 11842 / DSM 20081 / BCRC 10696 / JCM 1002 / NBRC 13953 / NCIMB 11778 / NCTC 12712 / WDCM 00102 / Lb 14).